The chain runs to 78 residues: Translation initiation factor IF-1, chloroplastic (78 aa).

The S1-like domain maps to 1-72 (MKKQNLIEME…TKGRITYRLR (72 aa)).

Belongs to the IF-1 family. In terms of assembly, component of the 30S ribosomal translation pre-initiation complex which assembles on the 30S ribosome in the order IF-2 and IF-3, IF-1 and N-formylmethionyl-tRNA(fMet); mRNA recruitment can occur at any time during PIC assembly.

The protein resides in the plastid. The protein localises to the chloroplast. Its function is as follows. One of the essential components for the initiation of protein synthesis. Stabilizes the binding of IF-2 and IF-3 on the 30S subunit to which N-formylmethionyl-tRNA(fMet) subsequently binds. Helps modulate mRNA selection, yielding the 30S pre-initiation complex (PIC). Upon addition of the 50S ribosomal subunit IF-1, IF-2 and IF-3 are released leaving the mature 70S translation initiation complex. The protein is Translation initiation factor IF-1, chloroplastic of Chaetosphaeridium globosum (Charophycean green alga).